A 401-amino-acid polypeptide reads, in one-letter code: Elongation factor Tu 2 (401 aa).

Residues 10-209 (KPHVNVGTIG…AVDEYIPTPV (200 aa)) enclose the tr-type G domain. The G1 stretch occupies residues 19–26 (GHVDHGKT). 19 to 26 (GHVDHGKT) contributes to the GTP binding site. Mg(2+) is bound at residue threonine 26. Residues 60-64 (GITIA) are G2. The interval 81 to 84 (DCPG) is G3. Residues 81–85 (DCPGH) and 136–139 (NKVD) each bind GTP. The interval 136–139 (NKVD) is G4. The interval 174–176 (SAL) is G5.

The protein belongs to the TRAFAC class translation factor GTPase superfamily. Classic translation factor GTPase family. EF-Tu/EF-1A subfamily. Monomer.

The protein resides in the cytoplasm. It carries out the reaction GTP + H2O = GDP + phosphate + H(+). Its function is as follows. GTP hydrolase that promotes the GTP-dependent binding of aminoacyl-tRNA to the A-site of ribosomes during protein biosynthesis. This chain is Elongation factor Tu 2, found in Roseiflexus sp. (strain RS-1).